Consider the following 452-residue polypeptide: Pentatricopeptide repeat-containing protein At2g30780 (452 aa).

7 PPR repeats span residues 137-171 (TASV…THCA), 173-207 (TVVT…KLPP), 208-242 (NSVT…PVEP), 243-273 (DTDT…IKDQ), 350-384 (KSSI…GWKL), 385-419 (CRSL…NYGL), and 420-452 (VTKT…KRGL).

The protein belongs to the PPR family. P subfamily.

In Arabidopsis thaliana (Mouse-ear cress), this protein is Pentatricopeptide repeat-containing protein At2g30780.